Here is a 72-residue protein sequence, read N- to C-terminus: Translation initiation factor IF-1 (72 aa).

Residues M1–K72 enclose the S1-like domain.

The protein belongs to the IF-1 family. In terms of assembly, component of the 30S ribosomal translation pre-initiation complex which assembles on the 30S ribosome in the order IF-2 and IF-3, IF-1 and N-formylmethionyl-tRNA(fMet); mRNA recruitment can occur at any time during PIC assembly.

The protein localises to the cytoplasm. One of the essential components for the initiation of protein synthesis. Stabilizes the binding of IF-2 and IF-3 on the 30S subunit to which N-formylmethionyl-tRNA(fMet) subsequently binds. Helps modulate mRNA selection, yielding the 30S pre-initiation complex (PIC). Upon addition of the 50S ribosomal subunit IF-1, IF-2 and IF-3 are released leaving the mature 70S translation initiation complex. The sequence is that of Translation initiation factor IF-1 from Sinorhizobium medicae (strain WSM419) (Ensifer medicae).